We begin with the raw amino-acid sequence, 208 residues long: Uracil phosphoribosyltransferase (208 aa).

5-phospho-alpha-D-ribose 1-diphosphate is bound by residues Arg78, Arg103, and Asp130–Ser138. Residues Ile193 and Gly198–Ala200 each bind uracil. A 5-phospho-alpha-D-ribose 1-diphosphate-binding site is contributed by Asp199.

This sequence belongs to the UPRTase family. The cofactor is Mg(2+).

The catalysed reaction is UMP + diphosphate = 5-phospho-alpha-D-ribose 1-diphosphate + uracil. It participates in pyrimidine metabolism; UMP biosynthesis via salvage pathway; UMP from uracil: step 1/1. Its activity is regulated as follows. Allosterically activated by GTP. Functionally, catalyzes the conversion of uracil and 5-phospho-alpha-D-ribose 1-diphosphate (PRPP) to UMP and diphosphate. The sequence is that of Uracil phosphoribosyltransferase from Citrobacter koseri (strain ATCC BAA-895 / CDC 4225-83 / SGSC4696).